We begin with the raw amino-acid sequence, 266 residues long: 3-methyl-2-oxobutanoate hydroxymethyltransferase 2 (266 aa).

Mg(2+)-binding residues include D45 and D84. Residues 45-46 (DS), D84, and K112 each bind 3-methyl-2-oxobutanoate. E114 contributes to the Mg(2+) binding site. E181 (proton acceptor) is an active-site residue.

This sequence belongs to the PanB family. In terms of assembly, homodecamer; pentamer of dimers. Mg(2+) serves as cofactor.

The protein resides in the cytoplasm. The catalysed reaction is 3-methyl-2-oxobutanoate + (6R)-5,10-methylene-5,6,7,8-tetrahydrofolate + H2O = 2-dehydropantoate + (6S)-5,6,7,8-tetrahydrofolate. It functions in the pathway cofactor biosynthesis; (R)-pantothenate biosynthesis; (R)-pantoate from 3-methyl-2-oxobutanoate: step 1/2. In terms of biological role, catalyzes the reversible reaction in which hydroxymethyl group from 5,10-methylenetetrahydrofolate is transferred onto alpha-ketoisovalerate to form ketopantoate. The chain is 3-methyl-2-oxobutanoate hydroxymethyltransferase 2 from Pseudomonas entomophila (strain L48).